The primary structure comprises 96 residues: uncharacterized protein (96 aa).

Residues 53–71 traverse the membrane as a helical segment; that stretch reads VLLMPLLQSFVLSLALMGV.

It is found in the membrane. This is an uncharacterized protein from Saccharomyces cerevisiae (strain ATCC 204508 / S288c) (Baker's yeast).